Reading from the N-terminus, the 291-residue chain is Formamidopyrimidine-DNA glycosylase (291 aa).

The active-site Schiff-base intermediate with DNA is proline 2. The Proton donor role is filled by glutamate 3. Lysine 58 functions as the Proton donor; for beta-elimination activity in the catalytic mechanism. DNA is bound by residues histidine 104, arginine 127, and arginine 172. The segment at phenylalanine 257–arginine 291 adopts an FPG-type zinc-finger fold. The Proton donor; for delta-elimination activity role is filled by arginine 281.

It belongs to the FPG family. As to quaternary structure, monomer. Zn(2+) is required as a cofactor.

The catalysed reaction is Hydrolysis of DNA containing ring-opened 7-methylguanine residues, releasing 2,6-diamino-4-hydroxy-5-(N-methyl)formamidopyrimidine.. The enzyme catalyses 2'-deoxyribonucleotide-(2'-deoxyribose 5'-phosphate)-2'-deoxyribonucleotide-DNA = a 3'-end 2'-deoxyribonucleotide-(2,3-dehydro-2,3-deoxyribose 5'-phosphate)-DNA + a 5'-end 5'-phospho-2'-deoxyribonucleoside-DNA + H(+). Functionally, involved in base excision repair of DNA damaged by oxidation or by mutagenic agents. Acts as a DNA glycosylase that recognizes and removes damaged bases. Has a preference for oxidized purines, such as 7,8-dihydro-8-oxoguanine (8-oxoG). Has AP (apurinic/apyrimidinic) lyase activity and introduces nicks in the DNA strand. Cleaves the DNA backbone by beta-delta elimination to generate a single-strand break at the site of the removed base with both 3'- and 5'-phosphates. This chain is Formamidopyrimidine-DNA glycosylase, found in Ralstonia pickettii (strain 12J).